The primary structure comprises 215 residues: Urease accessory protein UreF (215 aa).

This sequence belongs to the UreF family. In terms of assembly, ureD, UreF and UreG form a complex that acts as a GTP-hydrolysis-dependent molecular chaperone, activating the urease apoprotein by helping to assemble the nickel containing metallocenter of UreC. The UreE protein probably delivers the nickel.

The protein localises to the cytoplasm. Required for maturation of urease via the functional incorporation of the urease nickel metallocenter. The sequence is that of Urease accessory protein UreF from Paracoccus denitrificans (strain Pd 1222).